The primary structure comprises 124 residues: Fluoride-specific ion channel FluC (124 aa).

Helical transmembrane passes span 4–24, 35–55, 60–80, and 102–122; these read LLLV…ISIF, FGTL…YALG, ISPE…TTFS, and VVLN…LVFS. Residues glycine 74 and threonine 77 each coordinate Na(+).

Belongs to the fluoride channel Fluc/FEX (TC 1.A.43) family.

It localises to the cell inner membrane. The enzyme catalyses fluoride(in) = fluoride(out). Its activity is regulated as follows. Na(+) is not transported, but it plays an essential structural role and its presence is essential for fluoride channel function. Fluoride-specific ion channel. Important for reducing fluoride concentration in the cell, thus reducing its toxicity. The polypeptide is Fluoride-specific ion channel FluC (Shewanella baltica (strain OS223)).